A 626-amino-acid polypeptide reads, in one-letter code: MSQNQETRGFQSEVKQLLQLMIHSLYSNKEIFLRELISNASDAADKLRFKALSNPALYEGDGDLRVRVSFDADKGTITISDNGIGMTREQVIDHLGTIAKSGTKEFLTALGQDQAKNSQLIGQFGVGFYSAFIVADKVTVKTRAAGEEADKAVLWESAGEGEYSVADIEKKSRGTDVILHLREDEKEFLNEWRLREIIGKYSDHIGLPVEMLTKEYDDEGKECGEKWEKINKSDALWTRSKNDVSDEEYKAFYKHLSHDFVDPVTWAHNKVEGNQAYTSLLYVPAKAPWDLFNREHKHGLKLYVQRVFIMDDAEQFIPNYLRFMRGLIDSNDLPLNVSREILQDNKITAALRKALTKRSLQMLEKLAKDDAEKYLQFWKEFGLVLKEGPAEDFANKETVAKLLRFASTHNDGSEQTVSLEDYILRMKEGQKAIYYITADSYVAAKNSPHLELFNKKGIEVLLLSDRIDEWMLSYLTEFDGKQLQSITKADLDLGDLADKESETQKQQDEAFGSFIERVKNLLGERVKTVRLTHNLTDTPAVVSTDNDQMTTQMAKLFAAAGQPVPEVKYTFELNPEHHLVKKVADIADETEFADWVELLLEQAMLAERGSLENPAAFIKRINKLLG.

Residues 1–339 (MSQNQETRGF…SNDLPLNVSR (339 aa)) are a; substrate-binding. A b region spans residues 340 to 555 (EILQDNKITA…NDQMTTQMAK (216 aa)). Residues 556–626 (LFAAAGQPVP…FIKRINKLLG (71 aa)) are c.

The protein belongs to the heat shock protein 90 family. In terms of assembly, homodimer.

It localises to the cytoplasm. Its function is as follows. Molecular chaperone. Has ATPase activity. This is Chaperone protein HtpG from Haemophilus influenzae (strain ATCC 51907 / DSM 11121 / KW20 / Rd).